We begin with the raw amino-acid sequence, 460 residues long: ATP synthase subunit beta (460 aa).

150–157 (GGAGVGKT) is a binding site for ATP.

This sequence belongs to the ATPase alpha/beta chains family. As to quaternary structure, F-type ATPases have 2 components, CF(1) - the catalytic core - and CF(0) - the membrane proton channel. CF(1) has five subunits: alpha(3), beta(3), gamma(1), delta(1), epsilon(1). CF(0) has three main subunits: a(1), b(2) and c(9-12). The alpha and beta chains form an alternating ring which encloses part of the gamma chain. CF(1) is attached to CF(0) by a central stalk formed by the gamma and epsilon chains, while a peripheral stalk is formed by the delta and b chains.

It localises to the cell inner membrane. It catalyses the reaction ATP + H2O + 4 H(+)(in) = ADP + phosphate + 5 H(+)(out). Functionally, produces ATP from ADP in the presence of a proton gradient across the membrane. The catalytic sites are hosted primarily by the beta subunits. The polypeptide is ATP synthase subunit beta (Proteus mirabilis (strain HI4320)).